Here is a 63-residue protein sequence, read N- to C-terminus: Prokaryotic ubiquitin-like protein Pup (63 aa).

Over residues 1–11 (MAQEQTRRGGG) the composition is skewed to basic and acidic residues. The segment at 1–36 (MAQEQTRRGGGGDDDEFTSSTSVGQERREKLTEETD) is disordered. The interval 20 to 57 (STSVGQERREKLTEETDDLLDEIDDVLEENAEDFVRAY) is ARC ATPase binding. The stretch at 23–51 (VGQERREKLTEETDDLLDEIDDVLEENAE) forms a coiled coil. Gln63 carries the post-translational modification Deamidated glutamine. Gln63 is covalently cross-linked (Isoglutamyl lysine isopeptide (Gln-Lys) (interchain with K-? in acceptor proteins)).

Belongs to the prokaryotic ubiquitin-like protein family. In terms of assembly, strongly interacts with the proteasome-associated ATPase ARC through a hydrophobic interface; the interacting region of Pup lies in its C-terminal half. There is one Pup binding site per ARC hexamer ring. Is modified by deamidation of its C-terminal glutamine to glutamate by the deamidase Dop, a prerequisite to the subsequent pupylation process.

It functions in the pathway protein degradation; proteasomal Pup-dependent pathway. In terms of biological role, protein modifier that is covalently attached to lysine residues of substrate proteins, thereby targeting them for proteasomal degradation. The tagging system is termed pupylation. The protein is Prokaryotic ubiquitin-like protein Pup of Mycobacterium leprae (strain Br4923).